A 128-amino-acid chain; its full sequence is Large ribosomal subunit protein bL19 (128 aa).

This sequence belongs to the bacterial ribosomal protein bL19 family.

Its function is as follows. This protein is located at the 30S-50S ribosomal subunit interface and may play a role in the structure and function of the aminoacyl-tRNA binding site. This Paraburkholderia xenovorans (strain LB400) protein is Large ribosomal subunit protein bL19.